The chain runs to 367 residues: Peptide chain release factor 1 (367 aa).

The residue at position 243 (Q243) is an N5-methylglutamine.

Belongs to the prokaryotic/mitochondrial release factor family. Methylated by PrmC. Methylation increases the termination efficiency of RF1.

The protein localises to the cytoplasm. Functionally, peptide chain release factor 1 directs the termination of translation in response to the peptide chain termination codons UAG and UAA. This Acidovorax ebreus (strain TPSY) (Diaphorobacter sp. (strain TPSY)) protein is Peptide chain release factor 1.